A 510-amino-acid chain; its full sequence is Light-independent protochlorophyllide reductase subunit B (510 aa).

Position 36 (Asp-36) interacts with [4Fe-4S] cluster. Asp-296 functions as the Proton donor in the catalytic mechanism. 431–432 (GM) contacts substrate.

Belongs to the ChlB/BchB/BchZ family. As to quaternary structure, protochlorophyllide reductase is composed of three subunits; ChlL, ChlN and ChlB. Forms a heterotetramer of two ChlB and two ChlN subunits. Requires [4Fe-4S] cluster as cofactor.

The enzyme catalyses chlorophyllide a + oxidized 2[4Fe-4S]-[ferredoxin] + 2 ADP + 2 phosphate = protochlorophyllide a + reduced 2[4Fe-4S]-[ferredoxin] + 2 ATP + 2 H2O. It participates in porphyrin-containing compound metabolism; chlorophyll biosynthesis (light-independent). Its function is as follows. Component of the dark-operative protochlorophyllide reductase (DPOR) that uses Mg-ATP and reduced ferredoxin to reduce ring D of protochlorophyllide (Pchlide) to form chlorophyllide a (Chlide). This reaction is light-independent. The NB-protein (ChlN-ChlB) is the catalytic component of the complex. The chain is Light-independent protochlorophyllide reductase subunit B from Synechococcus sp. (strain JA-3-3Ab) (Cyanobacteria bacterium Yellowstone A-Prime).